The primary structure comprises 622 residues: Sodium/potassium/calcium exchanger 4 (622 aa).

A signal peptide spans 1-38; that stretch reads MALRGLIRQSKVRRRREMLPQQVGFVCAVLALVCCASG. The Extracellular portion of the chain corresponds to 39–97; it reads LFGSLGHKTASAGKHVLLDTWRNRKLMAPINGTPLAKNCTDPAIHEFPTDLFSNKERQH. The N-linked (GlcNAc...) asparagine glycan is linked to N76. Residues 98-118 traverse the membrane as a helical segment; that stretch reads GAVLLHILGALYMFYALAIVC. At 119-142 the chain is on the cytoplasmic side; the sequence is DDFFVPSLEKICEKLHLSEDVAGA. The Alpha-1 repeat unit spans residues 139–179; sequence VAGATFMAAGSSTPELFASVIGVFITHGDVGVGTIVGSAVF. The chain crosses the membrane as a helical span at residues 143-163; sequence TFMAAGSSTPELFASVIGVFI. Over 164–172 the chain is Extracellular; it reads THGDVGVGT. The helical transmembrane segment at 173–193 threads the bilayer; it reads IVGSAVFNILCIIGVCGLFAG. Residues 194–200 lie on the Cytoplasmic side of the membrane; that stretch reads QVVRLTW. The helical transmembrane segment at 201–221 threads the bilayer; that stretch reads WAVCRDSVYYTLSVIVLIAFI. At 222 to 224 the chain is on the extracellular side; that stretch reads YDE. Residues 225–245 traverse the membrane as a helical segment; that stretch reads EIVWWEGLVLIILYVFYILIM. Topologically, residues 246–457 are cytoplasmic; it reads KYNMKMQTFF…RWEKFFMVTF (212 aa). Residues 358–408 are disordered; the sequence is ANGVNSKPLQNGRHENMENGNVPVENPEDPQQGQEQQPPPQPPPPEPESVE. Residues 394–404 are compositionally biased toward pro residues; sequence QPPPQPPPPEP. Residues 458–478 form a helical membrane-spanning segment; the sequence is ITATLWIAVFSYLMVWLVTII. Position 479 (G479) is a topological domain, extracellular. A helical transmembrane segment spans residues 480–500; it reads YTLGIPDVIMGITFLAAGTSV. The stretch at 495 to 526 is one Alpha-2 repeat; it reads AAGTSVPDCMASLIVARQGLGDMAVSNTIGSN. The Cytoplasmic segment spans residues 501 to 526; that stretch reads PDCMASLIVARQGLGDMAVSNTIGSN. Residues 527–547 form a helical membrane-spanning segment; the sequence is VFDILVGLGIPWGLQTMVINY. At 548-557 the chain is on the extracellular side; sequence GSTVKINSRG. A helical membrane pass occupies residues 558–578; it reads LVYSVVLLLGSVALTVLGIHL. Residues 579–586 lie on the Cytoplasmic side of the membrane; it reads NKWRLDRK. Residues 587-607 form a helical membrane-spanning segment; it reads LGIYVLVLYAVFLCFSIMIEF. Residues 608-622 are Extracellular-facing; the sequence is NVFTFVNLPMCREDD.

It belongs to the Ca(2+):cation antiporter (CaCA) (TC 2.A.19) family. SLC24A subfamily. As to expression, expressed in late secretory-stage and maturation-stage ameloblasts, with significantly increased expression during the late stages of amelogenesis (at protein level). Widely expressed in most regions of the brain, including hippocampus, neocortex, thalamus, striatum and olfactory bulb. Expressed in the olfactory sensory neurons.

Its subcellular location is the cell membrane. The protein resides in the cytoplasm. It carries out the reaction Ca(2+)(out) + K(+)(out) + 4 Na(+)(in) = Ca(2+)(in) + K(+)(in) + 4 Na(+)(out). Functionally, calcium, potassium:sodium antiporter that transports 1 Ca(2+) and 1 K(+) in exchange for 4 Na(+). Controls the rapid response termination and proper regulation of adaptation in olfactory sensory neurons (OSNs) which subsequently influences how odor information is encoded and perceived. May play a role in calcium transport during amelogenesis. This Mus musculus (Mouse) protein is Sodium/potassium/calcium exchanger 4.